Consider the following 554-residue polypeptide: Glucose-6-phosphate isomerase (554 aa).

Catalysis depends on Glu-359, which acts as the Proton donor. Catalysis depends on residues His-390 and Lys-518.

Belongs to the GPI family.

Its subcellular location is the cytoplasm. The enzyme catalyses alpha-D-glucose 6-phosphate = beta-D-fructose 6-phosphate. Its pathway is carbohydrate biosynthesis; gluconeogenesis. It participates in carbohydrate degradation; glycolysis; D-glyceraldehyde 3-phosphate and glycerone phosphate from D-glucose: step 2/4. Catalyzes the reversible isomerization of glucose-6-phosphate to fructose-6-phosphate. The polypeptide is Glucose-6-phosphate isomerase (Pseudomonas putida (strain W619)).